The sequence spans 237 residues: UDP-Gal:alpha-D-GlcNAc-diphosphoundecaprenol beta-1,4-galactosyltransferase (237 aa).

The active-site Nucleophile is glutamate 101.

Belongs to the glycosyltransferase 26 family. Mn(2+) serves as cofactor. Ni(2+) is required as a cofactor. It depends on Pb(2+) as a cofactor.

The enzyme catalyses N-acetyl-alpha-D-glucosaminyl-di-trans,octa-cis-undecaprenyl diphosphate + UDP-alpha-D-galactose = beta-D-Gal-(1-&gt;4)-alpha-D-GlcNAc-di-trans,octa-cis-undecaprenyl diphosphate + UDP + H(+). Its pathway is bacterial outer membrane biogenesis; LPS O-antigen biosynthesis. In terms of biological role, galactosyltransferase that adds one galactose residue in the beta-1-4 linkage to GlcNAc-alpha-pyrophosphate-lipid in the biosynthesis of the O-polysaccharide repeating unit of the O antigen. This is UDP-Gal:alpha-D-GlcNAc-diphosphoundecaprenol beta-1,4-galactosyltransferase (wfeD) from Shigella boydii.